We begin with the raw amino-acid sequence, 293 residues long: Ribosomal protein L11 methyltransferase (293 aa).

Residues T145, G166, D188, and N230 each contribute to the S-adenosyl-L-methionine site.

The protein belongs to the methyltransferase superfamily. PrmA family.

Its subcellular location is the cytoplasm. It carries out the reaction L-lysyl-[protein] + 3 S-adenosyl-L-methionine = N(6),N(6),N(6)-trimethyl-L-lysyl-[protein] + 3 S-adenosyl-L-homocysteine + 3 H(+). Its function is as follows. Methylates ribosomal protein L11. The sequence is that of Ribosomal protein L11 methyltransferase from Salmonella dublin (strain CT_02021853).